The primary structure comprises 228 residues: 2-C-methyl-D-erythritol 4-phosphate cytidylyltransferase (228 aa).

It belongs to the IspD/TarI cytidylyltransferase family. IspD subfamily.

It carries out the reaction 2-C-methyl-D-erythritol 4-phosphate + CTP + H(+) = 4-CDP-2-C-methyl-D-erythritol + diphosphate. It functions in the pathway isoprenoid biosynthesis; isopentenyl diphosphate biosynthesis via DXP pathway; isopentenyl diphosphate from 1-deoxy-D-xylulose 5-phosphate: step 2/6. In terms of biological role, catalyzes the formation of 4-diphosphocytidyl-2-C-methyl-D-erythritol from CTP and 2-C-methyl-D-erythritol 4-phosphate (MEP). In Actinobacillus pleuropneumoniae serotype 5b (strain L20), this protein is 2-C-methyl-D-erythritol 4-phosphate cytidylyltransferase.